Reading from the N-terminus, the 83-residue chain is Small ribosomal subunit protein bS18 (83 aa).

It belongs to the bacterial ribosomal protein bS18 family. In terms of assembly, part of the 30S ribosomal subunit. Forms a tight heterodimer with protein bS6.

In terms of biological role, binds as a heterodimer with protein bS6 to the central domain of the 16S rRNA, where it helps stabilize the platform of the 30S subunit. This is Small ribosomal subunit protein bS18 from Cytophaga hutchinsonii (strain ATCC 33406 / DSM 1761 / CIP 103989 / NBRC 15051 / NCIMB 9469 / D465).